A 198-amino-acid polypeptide reads, in one-letter code: Ribosomal RNA small subunit methyltransferase G (198 aa).

Residues Gly74, Phe79, Ile123 to Gln124, and Arg136 contribute to the S-adenosyl-L-methionine site.

This sequence belongs to the methyltransferase superfamily. RNA methyltransferase RsmG family.

It localises to the cytoplasm. The enzyme catalyses guanosine(527) in 16S rRNA + S-adenosyl-L-methionine = N(7)-methylguanosine(527) in 16S rRNA + S-adenosyl-L-homocysteine. Its function is as follows. Specifically methylates the N7 position of guanine in position 527 of 16S rRNA. The polypeptide is Ribosomal RNA small subunit methyltransferase G (Orientia tsutsugamushi (strain Boryong) (Rickettsia tsutsugamushi)).